The primary structure comprises 380 residues: Cytochrome b (380 aa).

A run of 4 helical transmembrane segments spans residues 34-54 (FGSL…LLAM), 78-99 (WLIR…YMHI), 114-134 (WNTG…GYVL), and 179-199 (FFAL…IHLT). 2 residues coordinate heme b: His84 and His98. Positions 183 and 197 each coordinate heme b. His202 lines the a ubiquinone pocket. 4 helical membrane-spanning segments follow: residues 227-247 (LKDI…ALFS), 289-309 (LGGV…PLLH), 321-341 (LSQL…WIGS), and 348-368 (FIII…ILFP).

It belongs to the cytochrome b family. The cytochrome bc1 complex contains 11 subunits: 3 respiratory subunits (MT-CYB, CYC1 and UQCRFS1), 2 core proteins (UQCRC1 and UQCRC2) and 6 low-molecular weight proteins (UQCRH/QCR6, UQCRB/QCR7, UQCRQ/QCR8, UQCR10/QCR9, UQCR11/QCR10 and a cleavage product of UQCRFS1). This cytochrome bc1 complex then forms a dimer. The cofactor is heme b.

It localises to the mitochondrion inner membrane. Its function is as follows. Component of the ubiquinol-cytochrome c reductase complex (complex III or cytochrome b-c1 complex) that is part of the mitochondrial respiratory chain. The b-c1 complex mediates electron transfer from ubiquinol to cytochrome c. Contributes to the generation of a proton gradient across the mitochondrial membrane that is then used for ATP synthesis. This is Cytochrome b (MT-CYB) from Oceanodroma furcata (Fork-tailed storm-petrel).